We begin with the raw amino-acid sequence, 208 residues long: MIFPCLFQSMLNLYAEALSTFSLLFEEAKSSSEIEPDAMMLATASLEGHPSVRTVLLKKFDARGFVFYSHLDSPKGRDLQANPQAALLFLWRSLREAGVQVRIEGRVQQVLAEEADAYFASRPRQSQIGAWASMQSCPLGSPEEFQARLAEVKAMFEGRDVPRPEEWVGFRVVPQVFEFWYGASFRLHERWRYQADAAGYWRKSLLYP.

Residues 53-58 (RTVLLK), 68-69 (YS), K75, and Q100 each bind FMN. K58 serves as a coordination point for substrate. Substrate is bound by residues Y118, R122, and S126. FMN is bound by residues 135-136 (QS) and W180. 186-188 (RLH) provides a ligand contact to substrate. R190 provides a ligand contact to FMN.

This sequence belongs to the pyridoxamine 5'-phosphate oxidase family. Homodimer. FMN is required as a cofactor.

The enzyme catalyses pyridoxamine 5'-phosphate + O2 + H2O = pyridoxal 5'-phosphate + H2O2 + NH4(+). It catalyses the reaction pyridoxine 5'-phosphate + O2 = pyridoxal 5'-phosphate + H2O2. The protein operates within cofactor metabolism; pyridoxal 5'-phosphate salvage; pyridoxal 5'-phosphate from pyridoxamine 5'-phosphate: step 1/1. Its pathway is cofactor metabolism; pyridoxal 5'-phosphate salvage; pyridoxal 5'-phosphate from pyridoxine 5'-phosphate: step 1/1. Functionally, catalyzes the oxidation of either pyridoxine 5'-phosphate (PNP) or pyridoxamine 5'-phosphate (PMP) into pyridoxal 5'-phosphate (PLP). The chain is Pyridoxine/pyridoxamine 5'-phosphate oxidase from Xylella fastidiosa (strain Temecula1 / ATCC 700964).